Consider the following 935-residue polypeptide: Protein translocase subunit SecA (935 aa).

ATP is bound by residues glutamine 90, glycine 108 to threonine 112, and aspartate 504. A disordered region spans residues glycine 543 to phenylalanine 568.

This sequence belongs to the SecA family. In terms of assembly, monomer and homodimer. Part of the essential Sec protein translocation apparatus which comprises SecA, SecYEG and auxiliary proteins SecDF. Other proteins may also be involved.

The protein localises to the cell inner membrane. It is found in the cellular thylakoid membrane. It localises to the cytoplasm. It catalyses the reaction ATP + H2O + cellular proteinSide 1 = ADP + phosphate + cellular proteinSide 2.. Functionally, part of the Sec protein translocase complex. Interacts with the SecYEG preprotein conducting channel. Has a central role in coupling the hydrolysis of ATP to the transfer of proteins into and across the cell membrane, serving as an ATP-driven molecular motor driving the stepwise translocation of polypeptide chains across the membrane. Its function is as follows. Probably participates in protein translocation into and across both the cytoplasmic and thylakoid membranes in cyanobacterial cells. This Rippkaea orientalis (strain PCC 8801 / RF-1) (Cyanothece sp. (strain PCC 8801)) protein is Protein translocase subunit SecA.